The primary structure comprises 290 residues: Agglutinin-2 (290 aa).

Positions 1–35 (MAISNTNLLQTKKPISLPLLAFITLFLMLLNRVNS) are cleaved as a signal peptide. N-linked (GlcNAc...) asparagine glycosylation is present at Asn155. Mn(2+) is bound by residues Glu165 and Asp167. Ca(2+)-binding residues include Asp167, Asn171, and Asp175. The Mn(2+) site is built by Asp175 and His180. Asn200 carries an N-linked (GlcNAc...) asparagine glycan.

The protein belongs to the leguminous lectin family. In terms of assembly, homotetramer.

Functionally, mannose/glucose binding bark lectin. Bark lectins are storage proteins that probably maintain stocks of nitrogen during dormant period. Self-aggregatable molecules that can bind their own carbohydrate side chains. They could also play a role in the plant's defense against phytophagous invertebrates or herbivorous higher animals. The sequence is that of Agglutinin-2 from Cladrastis kentukea (Yellow wood).